Here is a 427-residue protein sequence, read N- to C-terminus: rRNA-processing protein EBP2 (427 aa).

2 stretches are compositionally biased toward basic and acidic residues: residues 29–40 (KKKSQELKKEEP) and 49–65 (KKLEKKEKKADVKKEVA). The segment at 29–190 (KKKSQELKKE…FDSDADVVPH (162 aa)) is disordered. Residues 45–174 (ASNLKKLEKK…KEEQEEEQDV (130 aa)) adopt a coiled-coil conformation. The segment covering 79–88 (KEKRKLKKEL) has biased composition (basic residues). A compositionally biased stretch (basic and acidic residues) spans 89-105 (KKMQEQDATEAQKHMSG). S104 is modified (phosphoserine). Positions 106-126 (DEDESGDDREEEEEEEEEEEG) are enriched in acidic residues. The span at 127 to 138 (RLDLEKLAKSDS) shows a compositional bias: basic and acidic residues. 2 stretches are compositionally biased toward acidic residues: residues 139 to 155 (ESEDDSESENDSEEDED) and 163 to 185 (EEKEEQEEEQDVPLSDVEFDSDA). Phosphoserine occurs at positions 177 and 183. Coiled-coil stretches lie at residues 234-265 (KDIYDDTERELAFYKQSLDAVLVARDELKRLK) and 291-348 (KLIE…KHNE). The interval 361-427 (EVEGKRFDRG…PGKSRRARRF (67 aa)) is disordered. A compositionally biased stretch (polar residues) spans 397–407 (ATSSADVSGFS). Basic residues predominate over residues 409 to 427 (RKMKGKTNRPGKSRRARRF).

It belongs to the EBP2 family. Interacts with LOC1, NOP12, SIZ2, ULS1 and WSS1. Post-translationally, sumoylated.

The protein resides in the nucleus. It is found in the nucleolus. Functionally, required for the processing of the 27S pre-rRNA. Probably involved in the step of the processing of the 27 SA precursor into the 27 SB intermediate. This Saccharomyces cerevisiae (strain ATCC 204508 / S288c) (Baker's yeast) protein is rRNA-processing protein EBP2 (EBP2).